The chain runs to 1191 residues: DNA-directed RNA polymerase subunit beta (1191 aa).

Basic and acidic residues predominate over residues 1171–1181; that stretch reads RVKQEAEEKQA. The tract at residues 1171–1191 is disordered; the sequence is RVKQEAEEKQAEQVSEVVQED. Low complexity predominate over residues 1182–1191; the sequence is EQVSEVVQED.

Belongs to the RNA polymerase beta chain family. In terms of assembly, the RNAP catalytic core consists of 2 alpha, 1 beta, 1 beta' and 1 omega subunit. When a sigma factor is associated with the core the holoenzyme is formed, which can initiate transcription.

It catalyses the reaction RNA(n) + a ribonucleoside 5'-triphosphate = RNA(n+1) + diphosphate. In terms of biological role, DNA-dependent RNA polymerase catalyzes the transcription of DNA into RNA using the four ribonucleoside triphosphates as substrates. This Streptococcus agalactiae serotype Ia (strain ATCC 27591 / A909 / CDC SS700) protein is DNA-directed RNA polymerase subunit beta.